Consider the following 311-residue polypeptide: Putative S-adenosyl-L-methionine-dependent methyltransferase MSMEG_0095/MSMEI_0092 (311 aa).

S-adenosyl-L-methionine is bound by residues Asp134 and 163 to 164; that span reads DL.

It belongs to the UPF0677 family.

Its function is as follows. Exhibits S-adenosyl-L-methionine-dependent methyltransferase activity. This chain is Putative S-adenosyl-L-methionine-dependent methyltransferase MSMEG_0095/MSMEI_0092, found in Mycolicibacterium smegmatis (strain ATCC 700084 / mc(2)155) (Mycobacterium smegmatis).